The primary structure comprises 110 residues: UPF0060 membrane protein Psyr_3752 (110 aa).

4 helical membrane-spanning segments follow: residues leucine 5–leucine 25, glycine 28–leucine 48, alanine 59–glutamate 79, and leucine 84–glycine 104.

This sequence belongs to the UPF0060 family.

It is found in the cell inner membrane. This Pseudomonas syringae pv. syringae (strain B728a) protein is UPF0060 membrane protein Psyr_3752.